Reading from the N-terminus, the 296-residue chain is MAALDGLPPLRDVIQRHGLDAKKALGQNFLLDLNLTQKIARTAGPLEDVTVIEVGPGPGGLTRAILALGARKVVAIERDPRCLPALAEISAHYPGRLDVVEGDALKVDFERLAEGPVRIIANLPYNVGTQLLVNWLLPERWPPFWQSMTLMIQREVGLRIVAGADDDHYGRLGVLCGWRTKARLAFDVPPQAFTPPPKVTSTVVHLEPIDNPIPCAVSALEKVTQAAFGQRRKMLRQSLKSIGGEALLGKAGIDPQRRAETLTVEEFCRLANCLLGEKVPRSGAAPLRTGFPSEDR.

S-adenosyl-L-methionine contacts are provided by Asn-28, Leu-30, Gly-55, Glu-77, Asp-103, and Asn-122.

It belongs to the class I-like SAM-binding methyltransferase superfamily. rRNA adenine N(6)-methyltransferase family. RsmA subfamily.

Its subcellular location is the cytoplasm. The enzyme catalyses adenosine(1518)/adenosine(1519) in 16S rRNA + 4 S-adenosyl-L-methionine = N(6)-dimethyladenosine(1518)/N(6)-dimethyladenosine(1519) in 16S rRNA + 4 S-adenosyl-L-homocysteine + 4 H(+). Its function is as follows. Specifically dimethylates two adjacent adenosines (A1518 and A1519) in the loop of a conserved hairpin near the 3'-end of 16S rRNA in the 30S particle. May play a critical role in biogenesis of 30S subunits. This is Ribosomal RNA small subunit methyltransferase A from Sinorhizobium fredii (strain NBRC 101917 / NGR234).